A 479-amino-acid polypeptide reads, in one-letter code: Flotillin-like protein 3 (479 aa).

C36 carries S-palmitoyl cysteine lipidation. Coiled-coil stretches lie at residues 227–251 (KVKT…AALA) and 306–326 (EYET…KQAE).

This sequence belongs to the band 7/mec-2 family. Flotillin subfamily. In terms of processing, may be palmitoylated.

Its subcellular location is the cell membrane. The protein localises to the membrane. It is found in the caveola. Functionally, may act as a scaffolding protein within caveolar membranes, functionally participating in formation of caveolae or caveolae-like vesicles. The chain is Flotillin-like protein 3 (FLOT3) from Arabidopsis thaliana (Mouse-ear cress).